Consider the following 343-residue polypeptide: Holliday junction branch migration complex subunit RuvB (343 aa).

The segment at 4-193 (TDNLTAAQPQ…FGIVSRLEFY (190 aa)) is large ATPase domain (RuvB-L). Residues L32, R33, G74, K77, T78, T79, 140-142 (EDY), R183, Y193, and R230 contribute to the ATP site. Mg(2+) is bound at residue T78. The tract at residues 194 to 264 (ENRDLATIVS…IADAALSMLD (71 aa)) is small ATPAse domain (RuvB-S). Residues 267-343 (VQGLDVMDRK…YLHFGLPVEK (77 aa)) form a head domain (RuvB-H) region. The DNA site is built by R322 and R327.

The protein belongs to the RuvB family. As to quaternary structure, homohexamer. Forms an RuvA(8)-RuvB(12)-Holliday junction (HJ) complex. HJ DNA is sandwiched between 2 RuvA tetramers; dsDNA enters through RuvA and exits via RuvB. An RuvB hexamer assembles on each DNA strand where it exits the tetramer. Each RuvB hexamer is contacted by two RuvA subunits (via domain III) on 2 adjacent RuvB subunits; this complex drives branch migration. In the full resolvosome a probable DNA-RuvA(4)-RuvB(12)-RuvC(2) complex forms which resolves the HJ.

Its subcellular location is the cytoplasm. It carries out the reaction ATP + H2O = ADP + phosphate + H(+). Functionally, the RuvA-RuvB-RuvC complex processes Holliday junction (HJ) DNA during genetic recombination and DNA repair, while the RuvA-RuvB complex plays an important role in the rescue of blocked DNA replication forks via replication fork reversal (RFR). RuvA specifically binds to HJ cruciform DNA, conferring on it an open structure. The RuvB hexamer acts as an ATP-dependent pump, pulling dsDNA into and through the RuvAB complex. RuvB forms 2 homohexamers on either side of HJ DNA bound by 1 or 2 RuvA tetramers; 4 subunits per hexamer contact DNA at a time. Coordinated motions by a converter formed by DNA-disengaged RuvB subunits stimulates ATP hydrolysis and nucleotide exchange. Immobilization of the converter enables RuvB to convert the ATP-contained energy into a lever motion, pulling 2 nucleotides of DNA out of the RuvA tetramer per ATP hydrolyzed, thus driving DNA branch migration. The RuvB motors rotate together with the DNA substrate, which together with the progressing nucleotide cycle form the mechanistic basis for DNA recombination by continuous HJ branch migration. Branch migration allows RuvC to scan DNA until it finds its consensus sequence, where it cleaves and resolves cruciform DNA. This chain is Holliday junction branch migration complex subunit RuvB, found in Neisseria meningitidis serogroup A / serotype 4A (strain DSM 15465 / Z2491).